The chain runs to 464 residues: tRNA-2-methylthio-N(6)-dimethylallyladenosine synthase (464 aa).

The segment at 1–24 is disordered; the sequence is MSDLVPLSRKPAPAAGGPAPSPAA. Low complexity predominate over residues 8–18; that stretch reads SRKPAPAAGGP. One can recognise an MTTase N-terminal domain in the interval 27 to 142; sequence RKVYVHTFGC…LPEMVERARD (116 aa). The [4Fe-4S] cluster site is built by Cys36, Cys72, Cys105, Cys180, Cys184, and Cys187. Residues 166–398 enclose the Radical SAM core domain; the sequence is ARGRVTAFVT…LAAQRRIAGE (233 aa). Positions 401–464 constitute a TRAM domain; the sequence is AGELGKVVEV…GGSSLSGTLA (64 aa).

Belongs to the methylthiotransferase family. MiaB subfamily. In terms of assembly, monomer. [4Fe-4S] cluster is required as a cofactor.

The protein resides in the cytoplasm. The enzyme catalyses N(6)-dimethylallyladenosine(37) in tRNA + (sulfur carrier)-SH + AH2 + 2 S-adenosyl-L-methionine = 2-methylsulfanyl-N(6)-dimethylallyladenosine(37) in tRNA + (sulfur carrier)-H + 5'-deoxyadenosine + L-methionine + A + S-adenosyl-L-homocysteine + 2 H(+). Functionally, catalyzes the methylthiolation of N6-(dimethylallyl)adenosine (i(6)A), leading to the formation of 2-methylthio-N6-(dimethylallyl)adenosine (ms(2)i(6)A) at position 37 in tRNAs that read codons beginning with uridine. The chain is tRNA-2-methylthio-N(6)-dimethylallyladenosine synthase from Anaeromyxobacter sp. (strain K).